We begin with the raw amino-acid sequence, 358 residues long: Tripartite motif-containing protein 54 (358 aa).

Residues Cys26–Arg82 form an RING-type zinc finger. The segment at Glu121–Leu163 adopts a B box-type zinc-finger fold. Residues Cys126, His129, Cys149, and His155 each contribute to the Zn(2+) site. Residues Lys168–Gln211 form a mediates microtubule-binding and homooligomerization region. A coiled-coil region spans residues Gln194–Glu258. In terms of domain architecture, COS spans Met271–Gln329. A disordered region spans residues Ile326 to Pro358. Residues Gly334 to Glu345 show a composition bias toward acidic residues.

In terms of assembly, homooligomer and heterooligomer. Interacts with TRIM63 and probably with TRIM55. Interacts with tubulin.

The protein localises to the cytoplasm. It is found in the cytoskeleton. Its subcellular location is the myofibril. It localises to the sarcomere. The protein resides in the z line. Its function is as follows. May bind and stabilize microtubules during myotubes formation. This chain is Tripartite motif-containing protein 54 (TRIM54), found in Pongo abelii (Sumatran orangutan).